The following is a 190-amino-acid chain: Threonylcarbamoyl-AMP synthase (190 aa).

One can recognise a YrdC-like domain in the interval 7–190 (RDAIAAAIDV…ALTGELFRQG (184 aa)).

It belongs to the SUA5 family. TsaC subfamily.

It is found in the cytoplasm. It carries out the reaction L-threonine + hydrogencarbonate + ATP = L-threonylcarbamoyladenylate + diphosphate + H2O. In terms of biological role, required for the formation of a threonylcarbamoyl group on adenosine at position 37 (t(6)A37) in tRNAs that read codons beginning with adenine. Catalyzes the conversion of L-threonine, HCO(3)(-)/CO(2) and ATP to give threonylcarbamoyl-AMP (TC-AMP) as the acyladenylate intermediate, with the release of diphosphate. The polypeptide is Threonylcarbamoyl-AMP synthase (Escherichia coli O9:H4 (strain HS)).